A 66-amino-acid polypeptide reads, in one-letter code: Sec-independent protein translocase protein TatA (66 aa).

A helical transmembrane segment spans residues 1–21 (MIGGLGMPELIIILVIILIIF). The segment at 45–66 (RDAELNEGDKDDKEKEQEKLDK) is disordered.

This sequence belongs to the TatA/E family. As to quaternary structure, the Tat system comprises two distinct complexes: a TatABC complex, containing multiple copies of TatA, TatB and TatC subunits, and a separate TatA complex, containing only TatA subunits. Substrates initially bind to the TatABC complex, which probably triggers association of the separate TatA complex to form the active translocon.

Its subcellular location is the cell inner membrane. Its function is as follows. Part of the twin-arginine translocation (Tat) system that transports large folded proteins containing a characteristic twin-arginine motif in their signal peptide across membranes. TatA could form the protein-conducting channel of the Tat system. This Desulforapulum autotrophicum (strain ATCC 43914 / DSM 3382 / VKM B-1955 / HRM2) (Desulfobacterium autotrophicum) protein is Sec-independent protein translocase protein TatA.